A 165-amino-acid chain; its full sequence is Crossover junction endodeoxyribonuclease RuvC (165 aa).

Catalysis depends on residues aspartate 7, glutamate 67, and aspartate 140. Mg(2+) contacts are provided by aspartate 7, glutamate 67, and aspartate 140.

Belongs to the RuvC family. As to quaternary structure, homodimer which binds Holliday junction (HJ) DNA. The HJ becomes 2-fold symmetrical on binding to RuvC with unstacked arms; it has a different conformation from HJ DNA in complex with RuvA. In the full resolvosome a probable DNA-RuvA(4)-RuvB(12)-RuvC(2) complex forms which resolves the HJ. Mg(2+) serves as cofactor.

It localises to the cytoplasm. The catalysed reaction is Endonucleolytic cleavage at a junction such as a reciprocal single-stranded crossover between two homologous DNA duplexes (Holliday junction).. Functionally, the RuvA-RuvB-RuvC complex processes Holliday junction (HJ) DNA during genetic recombination and DNA repair. Endonuclease that resolves HJ intermediates. Cleaves cruciform DNA by making single-stranded nicks across the HJ at symmetrical positions within the homologous arms, yielding a 5'-phosphate and a 3'-hydroxyl group; requires a central core of homology in the junction. The consensus cleavage sequence is 5'-(A/T)TT(C/G)-3'. Cleavage occurs on the 3'-side of the TT dinucleotide at the point of strand exchange. HJ branch migration catalyzed by RuvA-RuvB allows RuvC to scan DNA until it finds its consensus sequence, where it cleaves and resolves the cruciform DNA. This is Crossover junction endodeoxyribonuclease RuvC from Thermotoga petrophila (strain ATCC BAA-488 / DSM 13995 / JCM 10881 / RKU-1).